The sequence spans 222 residues: Coiled-coil domain-containing protein 70 (222 aa).

A coiled-coil region spans residues 129–153 (NALWERDRNLLQEDKALWEEEKALW).

This is Coiled-coil domain-containing protein 70 from Homo sapiens (Human).